The primary structure comprises 207 residues: Vascular endothelial growth factor B (207 aa).

Residues 1 to 21 (MSPLLRRLLLAALLQLAPAQA) form the signal peptide. Disulfide bonds link Cys-47/Cys-89, Cys-78/Cys-122, and Cys-82/Cys-124. Over residues 122–139 (CECRPKKKDSAVKPDRAA) the composition is skewed to basic and acidic residues. The interval 122–207 (CECRPKKKDS…AASSVAKGGA (86 aa)) is disordered. Low complexity predominate over residues 174–207 (PSAHAAPSTTSALTPGPAAAAADAAASSVAKGGA).

The protein belongs to the PDGF/VEGF growth factor family. As to quaternary structure, homodimer; disulfide-linked. Can also form heterodimer with VEGF. VEGF-B186 is O-glycosylated. Expressed in all tissues except liver. Highest levels found in heart, skeletal muscle and pancreas.

It localises to the secreted. Growth factor for endothelial cells. VEGF-B167 binds heparin and neuropilin-1 whereas the binding to neuropilin-1 of VEGF-B186 is regulated by proteolysis. In Homo sapiens (Human), this protein is Vascular endothelial growth factor B (VEGFB).